Reading from the N-terminus, the 523-residue chain is MSFDNSARCGAMNAADEIIGPPLAQGLADQPAIVGGARSVTYGELEAMVNRTGNAMKAHGVGRGERVLFLMDDSPEMVAGYLGAMRIGAVAVALNVRLAPRDVRYVIEDSACRLLFVDAEFAHLYQEIAGELADPPQVVVRGAPQRIGMALDDFVAGQPDTLASEPAAPEDIAFWVYSSGTTGRPKAVMHSHGCVLIADRMEAEYFGVRPGDRIFATSKMFFGWALGHSMMGGLRCGATVIVAAGWPDPVRMIEVVDTHRPTLFFSTPVMYRNLLREGVGASEGFRNVRHFLSAGEKLPETLYQSWLEATGKPLIDGIGASETIFLFLVNDAGAQRPGSCGKPVPWAEVRLVDEAGADVVEPDIPGQIAIRTPSQFRGYWNLPEQTAKSLRDGWYFPGDMFSFDRDGYWYHNGRADDMLKISGQWVSPSEIEGCAMTAPGIAEAVVVGVPQEDGLTRLVLVAVPKDPSASQSRLSTQVQDTLMANLSIYKCPRTVRFVDELPRTATGKIQKFRLRELLKAGRL.

The protein belongs to the ATP-dependent AMP-binding enzyme family. Benzoate-CoA ligase subfamily.

The enzyme catalyses 3-hydroxybenzoate + ATP + CoA = 3-hydroxybenzoyl-CoA + AMP + diphosphate. It catalyses the reaction 4-hydroxybenzoate + ATP + CoA = 4-hydroxybenzoyl-CoA + AMP + diphosphate. Ligase involved in the anaerobic degradation of 3-hydroxybenzoate (3OHBz). Catalyzes the activation of 3-hydroxybenzoate to 3-hydroxybenzoyl-CoA. Also shows high activity with protocatechuate and 4-hydroxybenzoate. Exhibits lower activity with benzoate, but cannot use 2-hydroxybenzoate or benzoate analogs containing other substituents at the ortho position, such as 2-aminobenzoate (anthranilate). In Aromatoleum sp. (strain CIB) (Azoarcus sp. (strain CIB)), this protein is 3-hydroxybenzoate--CoA ligase.